The following is a 326-amino-acid chain: Beta-ketoacyl-[acyl-carrier-protein] synthase III 2 (326 aa).

Catalysis depends on residues Cys114 and His251. Positions 252–256 are ACP-binding; the sequence is SANAR. The active site involves Asn281.

Belongs to the thiolase-like superfamily. FabH family. As to quaternary structure, homodimer.

The protein resides in the cytoplasm. It catalyses the reaction malonyl-[ACP] + acetyl-CoA + H(+) = 3-oxobutanoyl-[ACP] + CO2 + CoA. The protein operates within lipid metabolism; fatty acid biosynthesis. Its function is as follows. Catalyzes the condensation reaction of fatty acid synthesis by the addition to an acyl acceptor of two carbons from malonyl-ACP. Catalyzes the first condensation reaction which initiates fatty acid synthesis and may therefore play a role in governing the total rate of fatty acid production. Possesses both acetoacetyl-ACP synthase and acetyl transacylase activities. Its substrate specificity determines the biosynthesis of branched-chain and/or straight-chain of fatty acids. The chain is Beta-ketoacyl-[acyl-carrier-protein] synthase III 2 from Staphylococcus epidermidis (strain ATCC 12228 / FDA PCI 1200).